A 308-amino-acid polypeptide reads, in one-letter code: Tetraacyldisaccharide 4'-kinase (308 aa).

63-70 contributes to the ATP binding site; that stretch reads SFGGNGKT.

This sequence belongs to the LpxK family.

It carries out the reaction a lipid A disaccharide + ATP = a lipid IVA + ADP + H(+). Its pathway is glycolipid biosynthesis; lipid IV(A) biosynthesis; lipid IV(A) from (3R)-3-hydroxytetradecanoyl-[acyl-carrier-protein] and UDP-N-acetyl-alpha-D-glucosamine: step 6/6. Transfers the gamma-phosphate of ATP to the 4'-position of a tetraacyldisaccharide 1-phosphate intermediate (termed DS-1-P) to form tetraacyldisaccharide 1,4'-bis-phosphate (lipid IVA). The protein is Tetraacyldisaccharide 4'-kinase of Campylobacter jejuni subsp. jejuni serotype O:2 (strain ATCC 700819 / NCTC 11168).